A 143-amino-acid chain; its full sequence is uncharacterized protein (143 aa).

Residues 11 to 139 enclose the HTH marR-type domain; the sequence is EYELTTFIRR…FGELLQRMNK (129 aa). Positions 53-76 form a DNA-binding region, H-T-H motif; the sequence is VKELAESFKLDISTLSRQAAALEA.

This is an uncharacterized protein from Bacillus subtilis (strain 168).